A 151-amino-acid chain; its full sequence is MMMGMKFFSFYVVLLLVAASSGMRINGQSVSCLNQLAPCLNYLNGTKEVPQVCCNPLKSVIRNNPECLCRMISNRWSSQAERAGIDVNDAQMLPARCGEHVNPIACLTRSRGGSTNSDRSSSIGNTFSQSYWMTTLAIAATVLSYCHHIIS.

An N-terminal signal peptide occupies residues 1–22; the sequence is MMMGMKFFSFYVVLLLVAASSG. Intrachain disulfides connect Cys32-Cys69, Cys39-Cys53, Cys54-Cys97, and Cys67-Cys106. The N-linked (GlcNAc...) asparagine glycan is linked to Asn44. Ser120 carries GPI-anchor amidated serine lipidation. A propeptide spans 121–151 (removed in mature form); the sequence is SSIGNTFSQSYWMTTLAIAATVLSYCHHIIS.

This sequence belongs to the plant LTP family. As to expression, expressed in vascular tissues of all organs. Expressed in seedlings, preferentially in hypocotyls and roots. Also observed in siliques.

Its subcellular location is the cell membrane. Lipid transfer protein that promotes the number of phloem (pro)cambial and pericycle cells. The chain is Non-specific lipid transfer protein GPI-anchored 30 from Arabidopsis thaliana (Mouse-ear cress).